A 297-amino-acid polypeptide reads, in one-letter code: Acetaldehyde dehydrogenase (297 aa).

Cys128 functions as the Acyl-thioester intermediate in the catalytic mechanism. NAD(+) is bound by residues 159-167 and Asn272; that span reads SAGPGTRQN.

Belongs to the acetaldehyde dehydrogenase family.

It carries out the reaction acetaldehyde + NAD(+) + CoA = acetyl-CoA + NADH + H(+). This Desulfitobacterium hafniense (strain DSM 10664 / DCB-2) protein is Acetaldehyde dehydrogenase.